Reading from the N-terminus, the 320-residue chain is Cytochrome f (320 aa).

Positions 1–35 (MQTRNTFSWIREEITRSISVSLMIYIITWASISSA) are cleaved as a signal peptide. Tyrosine 36, cysteine 56, cysteine 59, and histidine 60 together coordinate heme. Residues 286–305 (VQGLLFFLGSVVLAQIFLVL) form a helical membrane-spanning segment.

The protein belongs to the cytochrome f family. As to quaternary structure, the 4 large subunits of the cytochrome b6-f complex are cytochrome b6, subunit IV (17 kDa polypeptide, petD), cytochrome f and the Rieske protein, while the 4 small subunits are PetG, PetL, PetM and PetN. The complex functions as a dimer. Heme is required as a cofactor. In terms of processing, purified from leaves as a water-soluble monomeric protein with a mass of 28.16 kDa, cleavage occurs after Gln-287 and separates the heme-binding from the membrane.

It is found in the plastid. Its subcellular location is the chloroplast thylakoid membrane. Component of the cytochrome b6-f complex, which mediates electron transfer between photosystem II (PSII) and photosystem I (PSI), cyclic electron flow around PSI, and state transitions. In Brassica rapa subsp. rapa (Turnip), this protein is Cytochrome f (petA).